The primary structure comprises 344 residues: Chorismatase (344 aa).

The substrate site is built by Y155, R162, Y215, and R228. The active-site Proton acceptor is E338.

Belongs to the FkbO/Hyg5 family. In terms of assembly, monomer.

It carries out the reaction chorismate + H2O = (3R,4R)-3,4-dihydroxy-3,4-dihydrobenzoate + pyruvate. Its activity is regulated as follows. Competitively inhibited by 3-(2-carboxyethyl)benzoate. Functionally, involved in the biosynthesis of the macrocyclic amino acid-linked polyketides FK506 and FK520 which are potent immunosuppressants that prevent T-cell proliferation through initial binding to the immunophilin FKBP12. Catalyzes the hydrolysis of chorismate via a 1,4-conjugate elimination of water to yield (4R,5R)-4,5-dihydroxycyclohexa-1,5-dienecarboxylic acid (DCDC). The protein is Chorismatase (fkbO) of Streptomyces hygroscopicus.